Reading from the N-terminus, the 77-residue chain is DNA-directed RNA polymerase subunit epsilon (77 aa).

It belongs to the RNA polymerase subunit epsilon family. As to quaternary structure, RNAP is composed of a core of 2 alpha, a beta and a beta' subunit. The core is associated with a delta subunit, and at least one of epsilon or omega. When a sigma factor is associated with the core the holoenzyme is formed, which can initiate transcription.

The enzyme catalyses RNA(n) + a ribonucleoside 5'-triphosphate = RNA(n+1) + diphosphate. Functionally, a non-essential component of RNA polymerase (RNAP). The polypeptide is DNA-directed RNA polymerase subunit epsilon (Streptococcus pneumoniae serotype 19F (strain G54)).